Here is a 311-residue protein sequence, read N- to C-terminus: Transcriptional regulatory protein MoaR1 (311 aa).

Residues 15–117 (LNATTAGAVQ…SEPPGYRLLI (103 aa)) constitute a DNA-binding region (ompR/PhoB-type).

Belongs to the AfsR/DnrI/RedD regulatory family.

Functionally, acts as a positive transcriptional regulator of the molybdopterin biosynthesis moa1 locus, promoting the expression of the moaA1B1C1D1 genes. The polypeptide is Transcriptional regulatory protein MoaR1 (moaR1) (Mycobacterium bovis (strain BCG / Pasteur 1173P2)).